Reading from the N-terminus, the 261-residue chain is Kallikrein 1-related peptidase b8 (261 aa).

Positions 1 to 18 (MRFLILFLALSLGGIDAA) are cleaved as a signal peptide. A propeptide spans 19–24 (PPLQSR) (activation peptide). The Peptidase S1 domain occupies 25–258 (VVGGFNCEKN…FNSWIKDTMT (234 aa)). 5 disulfides stabilise this stretch: cysteine 31-cysteine 173, cysteine 50-cysteine 66, cysteine 152-cysteine 219, cysteine 184-cysteine 198, and cysteine 209-cysteine 234. The active-site Charge relay system is the histidine 65. N-linked (GlcNAc...) asparagine glycosylation is present at asparagine 102. Aspartate 120 serves as the catalytic Charge relay system. Catalysis depends on serine 213, which acts as the Charge relay system.

It belongs to the peptidase S1 family. Kallikrein subfamily.

The catalysed reaction is Preferential cleavage of Arg-|-Xaa bonds in small molecule substrates. Highly selective action to release kallidin (lysyl-bradykinin) from kininogen involves hydrolysis of Met-|-Xaa or Leu-|-Xaa.. Glandular kallikreins cleave Met-Lys and Arg-Ser bonds in kininogen to release Lys-bradykinin. This chain is Kallikrein 1-related peptidase b8 (Klk1b8), found in Mus musculus (Mouse).